A 283-amino-acid polypeptide reads, in one-letter code: Pantothenate synthetase (283 aa).

An ATP-binding site is contributed by 30 to 37; the sequence is MGNLHDGH. H37 serves as the catalytic Proton donor. Residue Q61 coordinates (R)-pantoate. Residue Q61 coordinates beta-alanine. Residue 149-152 participates in ATP binding; sequence GEKD. Q155 is a (R)-pantoate binding site. 186-189 is an ATP binding site; the sequence is LSSR.

This sequence belongs to the pantothenate synthetase family. As to quaternary structure, homodimer.

The protein localises to the cytoplasm. It catalyses the reaction (R)-pantoate + beta-alanine + ATP = (R)-pantothenate + AMP + diphosphate + H(+). The protein operates within cofactor biosynthesis; (R)-pantothenate biosynthesis; (R)-pantothenate from (R)-pantoate and beta-alanine: step 1/1. Functionally, catalyzes the condensation of pantoate with beta-alanine in an ATP-dependent reaction via a pantoyl-adenylate intermediate. The polypeptide is Pantothenate synthetase (Escherichia coli O45:K1 (strain S88 / ExPEC)).